The sequence spans 235 residues: Cytochrome c-554 (235 aa).

Positions 1 to 24 are cleaved as a signal peptide; that stretch reads MKIMIACGLVAAALFTLTSGQSLA. Residues Cys-35, Cys-38, His-39, His-51, Cys-84, Cys-87, His-88, Cys-112, Cys-115, His-116, His-126, Cys-158, Cys-161, His-162, and His-203 each coordinate heme. A disordered region spans residues 121-144; that stretch reads NFRGDHRKSGQAFEKSGKKTPRKD.

In terms of processing, binds 4 heme groups per subunit.

Its subcellular location is the periplasm. Involved in ammonia oxidation; accepts electrons directly from hydroxylamine oxidoreductase (HAO). The sequence is that of Cytochrome c-554 (cycA1) from Nitrosomonas europaea (strain ATCC 19718 / CIP 103999 / KCTC 2705 / NBRC 14298).